A 159-amino-acid polypeptide reads, in one-letter code: Small ribosomal subunit protein bS16 (159 aa).

The segment covering 102 to 119 has biased composition (low complexity); the sequence is GIPEAAEEAPATESVAEA. The disordered stretch occupies residues 102 to 159; sequence GIPEAAEEAPATESVAEAEVADVPESELSEAATETAAAELSPPEAEVEKPQVEEAVEA. Acidic residues predominate over residues 120–129; it reads EVADVPESEL. Over residues 130–145 the composition is skewed to low complexity; it reads SEAATETAAAELSPPE.

The protein belongs to the bacterial ribosomal protein bS16 family.

The chain is Small ribosomal subunit protein bS16 from Synechococcus sp. (strain JA-2-3B'a(2-13)) (Cyanobacteria bacterium Yellowstone B-Prime).